The following is a 417-amino-acid chain: UDP-N-acetylglucosamine 1-carboxyvinyltransferase 2 (417 aa).

22–23 contacts phosphoenolpyruvate; the sequence is KN. Position 92 (arginine 92) interacts with UDP-N-acetyl-alpha-D-glucosamine. The active-site Proton donor is the cysteine 116. The residue at position 116 (cysteine 116) is a 2-(S-cysteinyl)pyruvic acid O-phosphothioketal. UDP-N-acetyl-alpha-D-glucosamine contacts are provided by residues 121-125, aspartate 305, and isoleucine 327; that span reads RPIDL.

It belongs to the EPSP synthase family. MurA subfamily.

Its subcellular location is the cytoplasm. It carries out the reaction phosphoenolpyruvate + UDP-N-acetyl-alpha-D-glucosamine = UDP-N-acetyl-3-O-(1-carboxyvinyl)-alpha-D-glucosamine + phosphate. The protein operates within cell wall biogenesis; peptidoglycan biosynthesis. In terms of biological role, cell wall formation. Adds enolpyruvyl to UDP-N-acetylglucosamine. This Caldanaerobacter subterraneus subsp. tengcongensis (strain DSM 15242 / JCM 11007 / NBRC 100824 / MB4) (Thermoanaerobacter tengcongensis) protein is UDP-N-acetylglucosamine 1-carboxyvinyltransferase 2.